Here is a 2860-residue protein sequence, read N- to C-terminus: MASSILAQSSTGATVDSSNLGATAAAATSVEATVSSLHNTHLNQLSSLSQHYTTPYHHPHSHSHPHHHYQQHYPQQQHLQQQQQQQHHAQQQHQQQQQQQQQQQQQHWDYYARQQQQHQQQQQQQQQPAAATGNTNGNSSNNGNNGNNGNNSNPDGSNTTVPAPLGSSNNSSSNHANAASGGNSGQRHGDANANAISAASAAVGNPGNQQPNNSAGNANSNSNSNSNSNGSYTRPWEMESKDNGPQPPQTQPHLQLKSGFEPFSKLPSFQSQFHGFNEQLLPDGTPMPVPIGAGVPPGSAAAVAAATGSIPPGSVGPNSVAGPVGPTAMSSLQTVAMSPASISVSSPGMMSVGSPLTQLSSLQTSITPPSAGSFPAPPPPNAFAHHHALNPHHHHRGASGYPTPYAELPLYPGFTPLSVKKEPISGGSDFEMLLKKEDFDLSNSGGAGLIHHPLQHGQPHPIPMGMHTPTSYDGNNSNNSYPQAAGGGSGSHTPHTTTTQPTPTTTTPVKVEKLLQSPIARLEARKKERRKQRPNSLESSAESEASGMDVDPSNPGQVDAVSSTANFKSPLSALGMGDSNDANASGCDKQSKKKRKRCGECVGCQRKDNCGECAPCRNDKSHQICKQRRCEKLTEKKIVFGADGQPVRPDSKRGRGKGKSSGSGNGTVNATGIAAGNGTPTTGQSRARKNSTKANKLNAAAASATSPRLSPVPAATLLPQQSPNTTSATGNLQQQQQQQQQQYQQHQQLLSQQQLLSQQQQQYQQPQQQQQHFQQQQQQHLQQQHAQQQHLPQQQHQITAQIQTMKDQPQQPMAPMAFYPTWQADPSQGWQNQFIQQIPQNTPAITSLNSLDFQTQSYAYPSNGYVQSGLGFDPNYGRSPYAAPVQRYDFQSQQLSTAPSAINQVGLQSVAGFAPSYAGQVSAAPVPPSQQQQQQQQQQQQQHLGADLNKTMSGNDTPGYPRVSSVPPRSLNCNGYSGDYSGSPATNSNSNNNSSSNTSNTNNSNASNNNATTVVSGGTTTPAPPPTVVAQPASSPMQPPNQAVPQSPTRSNMLQQQQQQHQSPTGNGLQPYVAPQQQQQQQQQQHLSSPPMQDWNWQQQQQQQQSLGGEGYAQGERLHLNTRIKSMIMRKSDPKDPPPDLQQQPQQVQQQQQTGHFLSYSHHLRPEAALSANGPSSATPTHPLPNLQQQQQQVQQVQQVQQQQQQQQAVGGQVAAEPIGGGGDHIWKPHHANSFKKPSVVSGYPASQDAQLQLQLQQHQPGQHTTINHSVDPPVVPPQQHPPVAAAQPKKSRSRSKASRAAAAAAAAAEAAAEIDRDRNSTDPGGGGLKPLSAHYPPHPHAAGGPPPGQDYHSQYIKTEPGLLGPPQPNKMEGYERNYQNFIQYADFCQNDGQGQPVQQHHGHGQQDYAGYHHNSAYYGAGASSFQQNFQQNFVPGYQHSTYGARGKPPANQPHQIHGHGQSLMELDRKPDTNSIIPLPTNYEKDIPAYPIPPHRYALGHGAPPHLSHHGMLEPKIEDMGMLGHGGGYAYLGSEGKPLNNGFSCCRQGGTRPPTAEHLKDGTCLGLGIQPKEELIDEDELIDTHGNGLKPIGGVGKAKGKQKPDEIPEIVVKHEKINPMFDTTDRLEKGNKTEIPECECFQSDKNPPEPGTYYTHLGTASSLMDLRREFEERCNLTGRQLRIEKIVYTGKEGKTSQGCPVAKWVIRRADLEEKILVVVKKRPGHRCIAAYIVVCMVAWDGMPRLEADNAYKNLIPKLNKYGLPTTRRCATNENRTCACQGLDPESSGASYSFGCSWSMYYNGCKYARSKTVRKFRLSVKSEEAAIEDHMNLIATLLAPVFKQVCPRSYDNQTKYEHEASDCRLGLEPGKPFSGVTACLDFCAHSHRDLHNMQDGCTVHVALLKPGNRDTRLPDDEQFHVLPLYTMDGTDEFESVEGQRDKHRTGAVQMLDKFPCEVRVRSTPLIPCRRHGKKRKDGDEAAPPDGDQDAVGDANSQSSSSNGAQSQTQANNQQSSPPALGTAHIKKENGNGVNANGASSKSKGKGKSNQSNNSSASTPGSAPPSTPSPRCQTPVTNNPSPAGSAFSTPPVHGSNANPQSNGGQGTGNQPGQLMSSNSSLMNMATMIDTFTDAQLQSNQISSTVLDSPYSYDYQTASYIDSRNYYGQWPTPHAPMGMQAQVGGLGGGGPGGTVAGVPPLTPSTPTAQPQLGVPPATSIAGGTTTGAPTGALPATAPPTATPTQLETSNGYGPGNYQTLVSNPASNLTNPGGVTTEVQQQHQQAQQQSALTGGVGPGGLPVVGGAPGDLKGRLVSEENPDSTTLVNHHHHHHNLTESKLTALTAMQPMTNLAPLTTSHHPQEGFVKPKPPPSDYTAQYTAQYPNNYQMYPPPPPPPHSAYSAYDAYQNMNYNYGYHQAYSPYGMYPQQTPPPTPPPPSPNWNMYGHHQTGSVNSGYGSANPAAGAGSLISSHGSVASAGVGLQKAMVPVPGPLHHQQQQVLQQQQQQQQQQQQQQQQQQQQQQQQVQQLQQEAPQTILPDLSNGQTNSDTVATPTPTGDSSSNDAGPGNPGAGNQAPASGAGAATTAPPIASPGSTNSTKIEPIGEVAEINENIEAFQDPQMGGVAIALNHGSVLIECAKHEMHATTAVRRPDRHHPTRMTLIFYQHRNLNRCRHGIDEWEEKMRVKKINTDLDNKAKEERERLIKKAAGEDMDELDEDALMQDEPVPIKKESSANGQQLKNGASGSKKKKSSDSKKSQANEQSKNEKVALHAPTLTTTSWTTLFPTHPCVVSGKYPEGNSSPTSSTNNAPNGGGCPAQQQQHLPPPPGSGLIHPPPGTPTGTAAPPPLPTPHQQLPQQQQT.

Disordered regions lie at residues 51–255 and 457–562; these read HYTT…PHLQ and GQPH…DAVS. Over residues 57 to 70 the composition is skewed to basic residues; that stretch reads HHPHSHSHPHHHYQ. Composition is skewed to low complexity over residues 71 to 181 and 191 to 231; these read QHYP…AASG and ANAN…SNGS. Residues 468-482 show a composition bias toward polar residues; it reads TPTSYDGNNSNNSYP. Composition is skewed to low complexity over residues 492-508 and 536-546; these read HTPH…TTTP and SLESSAESEAS. The segment at 591–631 adopts a CXXC-type zinc-finger fold; that stretch reads SKKKRKRCGECVGCQRKDNCGECAPCRNDKSHQICKQRRCE. Residues C598, C601, C604, C610, C613, C616, C625, and C630 each contribute to the Zn(2+) site. Disordered stretches follow at residues 641-734, 771-810, 920-1113, 1130-1155, 1170-1195, 1209-1356, and 1437-1460; these read GADG…NLQQ, QHFQ…DQPQ, QVSA…EGYA, RKSD…QQTG, LSAN…QQVQ, AVGG…HSQY, and GYQH…IHGH. Over residues 692–706 the composition is skewed to low complexity; that stretch reads TKANKLNAAAASATS. Positions 718-732 are enriched in polar residues; that stretch reads LPQQSPNTTSATGNL. Composition is skewed to low complexity over residues 771–804, 930–942, and 985–1021; these read QHFQ…QIQT, QQQQ…QQQQ, and ATNS…GTTT. Polar residues predominate over residues 1040-1054; the sequence is PNQAVPQSPTRSNML. Over residues 1076 to 1085 the composition is skewed to low complexity; that stretch reads QQQQQQQQQQ. A compositionally biased stretch (polar residues) spans 1086–1097; that stretch reads HLSSPPMQDWNW. Over residues 1141 to 1153 the composition is skewed to low complexity; it reads LQQQPQQVQQQQQ. Composition is skewed to low complexity over residues 1248-1263 and 1299-1312; these read QDAQ…QPGQ and SRAA…AEAA. Over residues 1337–1349 the composition is skewed to pro residues; that stretch reads PPHPHAAGGPPPG. 5 residues coordinate Zn(2+): C1638, C1640, C1699, H1725, and C1727. The interval 1657-2666 is interaction with wds; that stretch reads LGTASSLMDL…RMTLIFYQHR (1010 aa). R1767 is a 2-oxoglutarate binding site. The Zn(2+) site is built by C1777, C1779, C1795, C1804, and C1862. Residue C1878 participates in 2-oxoglutarate binding. Residue H1884 coordinates Zn(2+). Fe cation contacts are provided by H1886 and D1888. N1891 lines the substrate pocket. H1919 is a binding site for 2-oxoglutarate. 6 disordered regions span residues 1966-2115, 2198-2229, 2263-2334, 2350-2371, 2422-2444, and 2536-2598; these read PCRR…LMSS, LTPS…PTGA, SNLT…NLTE, APLT…PPSD, MYPQ…MYGH, and LPDL…NSTK. The segment covering 1979–1989 has biased composition (acidic residues); that stretch reads EAAPPDGDQDA. Low complexity-rich tracts occupy residues 1993-2015 and 2029-2059; these read ANSQ…QQSS and GNGV…STPG. The segment covering 2069–2086 has biased composition (polar residues); sequence RCQTPVTNNPSPAGSAFS. Residues 2212–2229 are compositionally biased toward low complexity; the sequence is PPATSIAGGTTTGAPTGA. Residues 2263-2275 are compositionally biased toward polar residues; the sequence is SNLTNPGGVTTEV. The segment covering 2276–2285 has biased composition (low complexity); sequence QQQHQQAQQQ. Residues 2290–2304 are compositionally biased toward gly residues; the sequence is GGVGPGGLPVVGGAP. Over residues 2426 to 2437 the composition is skewed to pro residues; it reads QTPPPTPPPPSP. Positions 2540–2562 are enriched in polar residues; sequence SNGQTNSDTVATPTPTGDSSSND. Residues 2570–2594 show a composition bias toward low complexity; the sequence is AGNQAPASGAGAATTAPPIASPGST. H2642 is a binding site for Fe cation. 2657–2659 contacts 2-oxoglutarate; that stretch reads RMT. 2663–2665 is a substrate binding site; that stretch reads YQH. H2673 lines the Zn(2+) pocket. Residues 2729–2860 are disordered; the sequence is KESSANGQQL…HQQLPQQQQT (132 aa). Polar residues predominate over residues 2732–2742; the sequence is SANGQQLKNGA. Residues 2750–2768 show a composition bias toward basic and acidic residues; it reads SSDSKKSQANEQSKNEKVA. Composition is skewed to low complexity over residues 2772-2785 and 2798-2821; these read PTLT…LFPT and NSSP…QQQH. Residues 2822-2849 are compositionally biased toward pro residues; sequence LPPPPGSGLIHPPPGTPTGTAAPPPLPT. Residues 2850-2860 are compositionally biased toward low complexity; the sequence is PHQQLPQQQQT.

This sequence belongs to the TET family. In terms of assembly, interacts (via C-terminus) with wds (via WD repeats). The cofactor is Fe(2+). Zn(2+) is required as a cofactor. As to expression, expressed in brain (at protein level).

The protein resides in the chromosome. The enzyme catalyses an N(6)-methyl-2'-deoxyadenosine in DNA + 2-oxoglutarate + O2 = a 2'-deoxyadenosine in DNA + formaldehyde + succinate + CO2. It carries out the reaction a 5-methyl-2'-deoxycytidine in DNA + 2-oxoglutarate + O2 = a 5-hydroxymethyl-2'-deoxycytidine in DNA + succinate + CO2. It catalyses the reaction a 5-hydroxymethyl-2'-deoxycytidine in DNA + 2-oxoglutarate + O2 = a 5-formyl-2'-deoxycytidine in DNA + succinate + CO2 + H2O. The catalysed reaction is a 5-formyl-2'-deoxycytidine in DNA + 2-oxoglutarate + O2 = a 5-carboxyl-2'-deoxycytidine in DNA + succinate + CO2 + H(+). Dioxygenase that specifically demethylates DNA methylated on the 6th position of adenine (N(6)-methyladenosine) DNA. N(6)-methyladenosine (m6A) DNA is present at a relatively high level at the very earliest embryonic stages but at low levels at the late embryonic stages and may act as a regulator of gene expression. Promotes differentiation of early germ cells in ovary. Contributes to neuronal morphology, development, and function in the brain. By interacting with histone modifier wds, binds to a specific set of genes, modulates intragenic (N(6)-methyladenosine) DNA levels and thereby maintains transcriptional activation. Also able to catalyze the conversion of the modified genomic base 5-methylcytosine (5mC) into 5-hydroxymethylcytosine (5hmC). The sequence is that of Methylcytosine dioxygenase TET from Drosophila melanogaster (Fruit fly).